The sequence spans 371 residues: Protein-tyrosine sulfotransferase 2 (371 aa).

The Cytoplasmic portion of the chain corresponds to 1–8; it reads MRVTMRRV. A helical; Signal-anchor for type II membrane protein transmembrane segment spans residues 9–25; sequence LLAVGSVVALMVTLHLG. The Lumenal segment spans residues 26–371; it reads QQVLECQHVL…QVTQNTSSSH (346 aa). 76–80 is a 3'-phosphoadenylyl sulfate binding site; the sequence is RSGTT. Cysteines 94 and 154 form a disulfide. Residue E97 is the Proton donor/acceptor of the active site. The segment at 99 to 103 is interaction with peptide substrate; that stretch reads RIIPR. 3'-phosphoadenylyl sulfate-binding residues include R181, S189, and R193. A disulfide bond links C223 and C231. 3'-phosphoadenylyl sulfate contacts are provided by residues Y236, 283 to 292, and K298; that span reads STDQVIKPVN. Residues N341 and N366 are each glycosylated (N-linked (GlcNAc...) asparagine).

Belongs to the protein sulfotransferase family.

It is found in the golgi apparatus membrane. The catalysed reaction is L-tyrosyl-[protein] + 3'-phosphoadenylyl sulfate = O-sulfo-L-tyrosine-[protein] + adenosine 3',5'-bisphosphate + H(+). Functionally, catalyzes the O-sulfation of tyrosine residues within acidic motifs of polypeptides, using 3'-phosphoadenylyl sulfate (PAPS) as cosubstrate. In Gallus gallus (Chicken), this protein is Protein-tyrosine sulfotransferase 2 (TPST2).